The chain runs to 196 residues: Putative archaetidylserine decarboxylase proenzyme (196 aa).

The Schiff-base intermediate with substrate; via pyruvic acid role is filled by Ser-164. Ser-164 is subject to Pyruvic acid (Ser); by autocatalysis.

The protein belongs to the phosphatidylserine decarboxylase family. PSD-A subfamily. Heterodimer of a large membrane-associated beta subunit and a small pyruvoyl-containing alpha subunit. Requires pyruvate as cofactor. Is synthesized initially as an inactive proenzyme. Formation of the active enzyme involves a self-maturation process in which the active site pyruvoyl group is generated from an internal serine residue via an autocatalytic post-translational modification. Two non-identical subunits are generated from the proenzyme in this reaction, and the pyruvate is formed at the N-terminus of the alpha chain, which is derived from the carboxyl end of the proenzyme. The post-translation cleavage follows an unusual pathway, termed non-hydrolytic serinolysis, in which the side chain hydroxyl group of the serine supplies its oxygen atom to form the C-terminus of the beta chain, while the remainder of the serine residue undergoes an oxidative deamination to produce ammonia and the pyruvoyl prosthetic group on the alpha chain.

It localises to the cell membrane. It catalyses the reaction archaetidylserine + H(+) = archaetidylethanolamine + CO2. Functionally, catalyzes the formation of archaetidylethanolamine (PtdEtn) from archaetidylserine (PtdSer). The protein is Putative archaetidylserine decarboxylase proenzyme of Halobacterium salinarum (strain ATCC 700922 / JCM 11081 / NRC-1) (Halobacterium halobium).